The following is a 136-amino-acid chain: MKTGTATTRRRLLAVLIALALPGAAVALLAEPSATGASDPCAASEVARTVGSVAKSMGDYLDSHPETNQVMTAVLQQQVGPGSVASLKAHFEANPKVASDLHALSQPLTDLSTRCSLPISGLQAIGLMQAVQGARR.

The first 27 residues, 1-27, serve as a signal peptide directing secretion; sequence MKTGTATTRRRLLAVLIALALPGAAVA. The cysteines at positions 41 and 115 are disulfide-linked. The heme site is built by Tyr60, His64, and His90.

In terms of assembly, dimer of dimers.

Its subcellular location is the secreted. Part of a heme-iron acquisition system. Acts by binding heme and delivering it to the membrane proteins MmpL3 and MmpL11. Can use free heme or heme from host hemoglobin. This is Heme-binding protein Rv0203 from Mycobacterium tuberculosis (strain ATCC 25618 / H37Rv).